Consider the following 455-residue polypeptide: Ribosomal protein uS12 methylthiotransferase RimO (455 aa).

Residues 30-140 form the MTTase N-terminal domain; sequence PTIGMVSLGC…VLDAVHGAVP (111 aa). Residues C39, C75, C104, C171, C175, and C178 each coordinate [4Fe-4S] cluster. A Radical SAM core domain is found at 157–386; the sequence is LTPRHFSYLK…MEKAQAISEV (230 aa). A TRAM domain is found at 389–455; that stretch reads AAKVGRRIEV…GEYDIWGRPV (67 aa).

Belongs to the methylthiotransferase family. RimO subfamily. Requires [4Fe-4S] cluster as cofactor.

The protein resides in the cytoplasm. The catalysed reaction is L-aspartate(89)-[ribosomal protein uS12]-hydrogen + (sulfur carrier)-SH + AH2 + 2 S-adenosyl-L-methionine = 3-methylsulfanyl-L-aspartate(89)-[ribosomal protein uS12]-hydrogen + (sulfur carrier)-H + 5'-deoxyadenosine + L-methionine + A + S-adenosyl-L-homocysteine + 2 H(+). In terms of biological role, catalyzes the methylthiolation of an aspartic acid residue of ribosomal protein uS12. The polypeptide is Ribosomal protein uS12 methylthiotransferase RimO (Cereibacter sphaeroides (strain ATCC 17023 / DSM 158 / JCM 6121 / CCUG 31486 / LMG 2827 / NBRC 12203 / NCIMB 8253 / ATH 2.4.1.) (Rhodobacter sphaeroides)).